Reading from the N-terminus, the 84-residue chain is Large ribosomal subunit protein bL27 (84 aa).

The protein belongs to the bacterial ribosomal protein bL27 family.

This Campylobacter jejuni subsp. jejuni serotype O:6 (strain 81116 / NCTC 11828) protein is Large ribosomal subunit protein bL27.